The following is a 396-amino-acid chain: 1-deoxy-D-xylulose 5-phosphate reductoisomerase (396 aa).

NADPH is bound by residues Thr-17, Gly-18, Ser-19, Ile-20, Asn-47, and Asn-130. Lys-131 serves as a coordination point for 1-deoxy-D-xylulose 5-phosphate. Glu-132 contacts NADPH. Position 156 (Asp-156) interacts with Mn(2+). Ser-157, Glu-158, Ser-182, and His-205 together coordinate 1-deoxy-D-xylulose 5-phosphate. Glu-158 contacts Mn(2+). Gly-211 is an NADPH binding site. 4 residues coordinate 1-deoxy-D-xylulose 5-phosphate: Ser-218, Asn-223, Lys-224, and Glu-227. Mn(2+) is bound at residue Glu-227.

This sequence belongs to the DXR family. Requires Mg(2+) as cofactor. Mn(2+) serves as cofactor.

The catalysed reaction is 2-C-methyl-D-erythritol 4-phosphate + NADP(+) = 1-deoxy-D-xylulose 5-phosphate + NADPH + H(+). It functions in the pathway isoprenoid biosynthesis; isopentenyl diphosphate biosynthesis via DXP pathway; isopentenyl diphosphate from 1-deoxy-D-xylulose 5-phosphate: step 1/6. Functionally, catalyzes the NADPH-dependent rearrangement and reduction of 1-deoxy-D-xylulose-5-phosphate (DXP) to 2-C-methyl-D-erythritol 4-phosphate (MEP). This chain is 1-deoxy-D-xylulose 5-phosphate reductoisomerase, found in Rhizobium johnstonii (strain DSM 114642 / LMG 32736 / 3841) (Rhizobium leguminosarum bv. viciae).